A 345-amino-acid polypeptide reads, in one-letter code: Glycerol-3-phosphate dehydrogenase [NAD(P)+] (345 aa).

4 residues coordinate NADPH: S23, Y24, H44, and K118. Sn-glycerol 3-phosphate is bound by residues K118, G147, and T149. A151 lines the NADPH pocket. The sn-glycerol 3-phosphate site is built by K203, D256, S266, R267, and N268. K203 (proton acceptor) is an active-site residue. NADPH is bound at residue R267. 2 residues coordinate NADPH: V291 and E293.

Belongs to the NAD-dependent glycerol-3-phosphate dehydrogenase family.

Its subcellular location is the cytoplasm. It carries out the reaction sn-glycerol 3-phosphate + NAD(+) = dihydroxyacetone phosphate + NADH + H(+). It catalyses the reaction sn-glycerol 3-phosphate + NADP(+) = dihydroxyacetone phosphate + NADPH + H(+). Its pathway is membrane lipid metabolism; glycerophospholipid metabolism. In terms of biological role, catalyzes the reduction of the glycolytic intermediate dihydroxyacetone phosphate (DHAP) to sn-glycerol 3-phosphate (G3P), the key precursor for phospholipid synthesis. This is Glycerol-3-phosphate dehydrogenase [NAD(P)+] from Vibrio parahaemolyticus serotype O3:K6 (strain RIMD 2210633).